Reading from the N-terminus, the 466-residue chain is ATP synthase subunit beta (466 aa).

ATP is bound at residue Gly-153 to Thr-160.

The protein belongs to the ATPase alpha/beta chains family. F-type ATPases have 2 components, CF(1) - the catalytic core - and CF(0) - the membrane proton channel. CF(1) has five subunits: alpha(3), beta(3), gamma(1), delta(1), epsilon(1). CF(0) has three main subunits: a(1), b(2) and c(9-12). The alpha and beta chains form an alternating ring which encloses part of the gamma chain. CF(1) is attached to CF(0) by a central stalk formed by the gamma and epsilon chains, while a peripheral stalk is formed by the delta and b chains.

The protein resides in the cell membrane. It catalyses the reaction ATP + H2O + 4 H(+)(in) = ADP + phosphate + 5 H(+)(out). In terms of biological role, produces ATP from ADP in the presence of a proton gradient across the membrane. The catalytic sites are hosted primarily by the beta subunits. The polypeptide is ATP synthase subunit beta (Leuconostoc citreum (strain KM20)).